Here is a 125-residue protein sequence, read N- to C-terminus: Splicing factor 3B subunit 6 (125 aa).

The interval 16-29 is interaction with pre-mRNA branch site; that stretch reads EVNRILYIRNLPYK. Residues 19 to 94 enclose the RRM domain; sequence RILYIRNLPY…RYLVVLYYNA (76 aa). K29 carries the N6-acetyllysine; alternate modification. K29 participates in a covalent cross-link: Glycyl lysine isopeptide (Lys-Gly) (interchain with G-Cter in SUMO2); alternate. N6-acetyllysine is present on K41.

In terms of assembly, component of the 17S U2 SnRNP complex, a ribonucleoprotein complex that contains small nuclear RNA (snRNA) U2 and a number of specific proteins. Part of the SF3B subcomplex of the 17S U2 SnRNP complex. SF3B associates with the splicing subcomplex SF3A and a 12S RNA unit to form the U2 small nuclear ribonucleoproteins complex (U2 snRNP). Within the SF3B complex interacts directly with SF3B1. Component of the minor spliceosome, which splices U12-type introns.

It is found in the nucleus. Component of the 17S U2 SnRNP complex of the spliceosome, a large ribonucleoprotein complex that removes introns from transcribed pre-mRNAs. The 17S U2 SnRNP complex (1) directly participates in early spliceosome assembly and (2) mediates recognition of the intron branch site during pre-mRNA splicing by promoting the selection of the pre-mRNA branch-site adenosine, the nucleophile for the first step of splicing. Within the 17S U2 SnRNP complex, SF3B6 is part of the SF3B subcomplex, which is required for 'A' complex assembly formed by the stable binding of U2 snRNP to the branchpoint sequence in pre-mRNA. Sequence independent binding of SF3A and SF3B subcomplexes upstream of the branch site is essential, it may anchor U2 snRNP to the pre-mRNA. Within the 17S U2 SnRNP complex, SF3B6 directly contacts the pre-mRNA branch site adenosine for the first catalytic step of splicing. SF3B6 stabilizes the intron branch site-U2 snRNA duplex, thereby promoting-binding of introns with poor sequence complementarity. Also acts as a component of the minor spliceosome, which is involved in the splicing of U12-type introns in pre-mRNAs. The protein is Splicing factor 3B subunit 6 (Sf3b6) of Mus musculus (Mouse).